The sequence spans 404 residues: Histidinol dehydrogenase (404 aa).

Positions 114, 176, and 199 each coordinate NAD(+). Positions 222, 244, and 247 each coordinate substrate. Glutamine 244 and histidine 247 together coordinate Zn(2+). Catalysis depends on proton acceptor residues glutamate 300 and histidine 301. Substrate-binding residues include histidine 301, aspartate 334, glutamate 388, and histidine 393. A Zn(2+)-binding site is contributed by aspartate 334. Histidine 393 serves as a coordination point for Zn(2+).

Belongs to the histidinol dehydrogenase family. Requires Zn(2+) as cofactor.

The enzyme catalyses L-histidinol + 2 NAD(+) + H2O = L-histidine + 2 NADH + 3 H(+). Its pathway is amino-acid biosynthesis; L-histidine biosynthesis; L-histidine from 5-phospho-alpha-D-ribose 1-diphosphate: step 9/9. Functionally, catalyzes the sequential NAD-dependent oxidations of L-histidinol to L-histidinaldehyde and then to L-histidine. In Archaeoglobus fulgidus (strain ATCC 49558 / DSM 4304 / JCM 9628 / NBRC 100126 / VC-16), this protein is Histidinol dehydrogenase (hisD).